Consider the following 181-residue polypeptide: MIAKGVSLRYSKALVDIATNPEQIKSHLLALEEFVGILETIPKLKELLFDPHLSTLTKKSILQRLFKDRLDETILNFLFVLIEKNRFKYIVDIRKEYHRLAKKRLGILEVRLLTAVSVSDIPQEKVRIKLQKTYQKEVEIQNVVNPDIVGGMILIMDHQIFDNSVKKRLAKLKVSLLTAKV.

It belongs to the ATPase delta chain family. In terms of assembly, F-type ATPases have 2 components, F(1) - the catalytic core - and F(0) - the membrane proton channel. F(1) has five subunits: alpha(3), beta(3), gamma(1), delta(1), epsilon(1). F(0) has three main subunits: a(1), b(2) and c(10-14). The alpha and beta chains form an alternating ring which encloses part of the gamma chain. F(1) is attached to F(0) by a central stalk formed by the gamma and epsilon chains, while a peripheral stalk is formed by the delta and b chains.

Its subcellular location is the cell inner membrane. Its function is as follows. F(1)F(0) ATP synthase produces ATP from ADP in the presence of a proton or sodium gradient. F-type ATPases consist of two structural domains, F(1) containing the extramembraneous catalytic core and F(0) containing the membrane proton channel, linked together by a central stalk and a peripheral stalk. During catalysis, ATP synthesis in the catalytic domain of F(1) is coupled via a rotary mechanism of the central stalk subunits to proton translocation. This protein is part of the stalk that links CF(0) to CF(1). It either transmits conformational changes from CF(0) to CF(1) or is implicated in proton conduction. This is ATP synthase subunit delta from Protochlamydia amoebophila (strain UWE25).